A 607-amino-acid polypeptide reads, in one-letter code: Elongation factor 4 (607 aa).

Residues 11 to 193 (SKIRNFSIIA…QIVEKVPAPT (183 aa)) form the tr-type G domain. GTP contacts are provided by residues 23 to 28 (DHGKST) and 140 to 143 (NKID).

This sequence belongs to the TRAFAC class translation factor GTPase superfamily. Classic translation factor GTPase family. LepA subfamily.

It is found in the cell membrane. It carries out the reaction GTP + H2O = GDP + phosphate + H(+). Its function is as follows. Required for accurate and efficient protein synthesis under certain stress conditions. May act as a fidelity factor of the translation reaction, by catalyzing a one-codon backward translocation of tRNAs on improperly translocated ribosomes. Back-translocation proceeds from a post-translocation (POST) complex to a pre-translocation (PRE) complex, thus giving elongation factor G a second chance to translocate the tRNAs correctly. Binds to ribosomes in a GTP-dependent manner. In Bacillus cereus (strain ATCC 10987 / NRS 248), this protein is Elongation factor 4.